We begin with the raw amino-acid sequence, 90 residues long: DNA-directed RNA polymerase subunit omega (90 aa).

It belongs to the RNA polymerase subunit omega family. The RNAP catalytic core consists of 2 alpha, 1 beta, 1 beta' and 1 omega subunit. When a sigma factor is associated with the core the holoenzyme is formed, which can initiate transcription.

It catalyses the reaction RNA(n) + a ribonucleoside 5'-triphosphate = RNA(n+1) + diphosphate. Promotes RNA polymerase assembly. Latches the N- and C-terminal regions of the beta' subunit thereby facilitating its interaction with the beta and alpha subunits. The chain is DNA-directed RNA polymerase subunit omega from Hamiltonella defensa subsp. Acyrthosiphon pisum (strain 5AT).